We begin with the raw amino-acid sequence, 194 residues long: Imidazoleglycerol-phosphate dehydratase (194 aa).

It belongs to the imidazoleglycerol-phosphate dehydratase family.

Its subcellular location is the cytoplasm. The catalysed reaction is D-erythro-1-(imidazol-4-yl)glycerol 3-phosphate = 3-(imidazol-4-yl)-2-oxopropyl phosphate + H2O. Its pathway is amino-acid biosynthesis; L-histidine biosynthesis; L-histidine from 5-phospho-alpha-D-ribose 1-diphosphate: step 6/9. The protein is Imidazoleglycerol-phosphate dehydratase of Bacillus cereus (strain AH820).